The primary structure comprises 461 residues: 23S rRNA (uracil(1939)-C(5))-methyltransferase RlmD (461 aa).

The disordered stretch occupies residues 1 to 26 (MAKHERGLRFQPTGGSKAPQIPTGKK). The 59-residue stretch at 20–78 (QIPTGKKQRLSIERLANDGRGIAFFEGKTWFVLGALAGEEVEARVLGAHGKVVEARTER) folds into the TRAM domain. [4Fe-4S] cluster-binding residues include C91, C97, C100, and C179. S-adenosyl-L-methionine is bound by residues Q283, F312, N317, E333, D360, and D381. C407 (nucleophile) is an active-site residue.

Belongs to the class I-like SAM-binding methyltransferase superfamily. RNA M5U methyltransferase family. RlmD subfamily.

It carries out the reaction uridine(1939) in 23S rRNA + S-adenosyl-L-methionine = 5-methyluridine(1939) in 23S rRNA + S-adenosyl-L-homocysteine + H(+). In terms of biological role, catalyzes the formation of 5-methyl-uridine at position 1939 (m5U1939) in 23S rRNA. The polypeptide is 23S rRNA (uracil(1939)-C(5))-methyltransferase RlmD (Pseudomonas fluorescens (strain Pf0-1)).